Reading from the N-terminus, the 220-residue chain is UPF0319 protein CKO_02102 (220 aa).

Positions 1-20 (MKTGIITMLFVLYLPVTAFA) are cleaved as a signal peptide.

The protein belongs to the UPF0319 family.

In Citrobacter koseri (strain ATCC BAA-895 / CDC 4225-83 / SGSC4696), this protein is UPF0319 protein CKO_02102.